The chain runs to 139 residues: MSNFWLAVVSAQHVRQGVEFGIVQTNHGKPQGIRRMSPGDGLVYYSPKTSYPDGEPLKAFTAVGRIADGEPWQSDVENFKPWRRKVHYDLSTDVSLAELQPQLEFTQEANWGYQLRRGVVPITEHDFALIRQAITSTTA.

The protein belongs to the UPF0310 family.

The chain is UPF0310 protein RSal33209_2865 from Renibacterium salmoninarum (strain ATCC 33209 / DSM 20767 / JCM 11484 / NBRC 15589 / NCIMB 2235).